Consider the following 196-residue polypeptide: Dephospho-CoA kinase (196 aa).

In terms of domain architecture, DPCK spans Ala-6 to Leu-196. Gly-14 to Thr-19 contributes to the ATP binding site.

This sequence belongs to the CoaE family.

It is found in the cytoplasm. It carries out the reaction 3'-dephospho-CoA + ATP = ADP + CoA + H(+). It participates in cofactor biosynthesis; coenzyme A biosynthesis; CoA from (R)-pantothenate: step 5/5. In terms of biological role, catalyzes the phosphorylation of the 3'-hydroxyl group of dephosphocoenzyme A to form coenzyme A. This Helicobacter pylori (strain J99 / ATCC 700824) (Campylobacter pylori J99) protein is Dephospho-CoA kinase.